The primary structure comprises 1195 residues: EST/SMG-like protein 2 (1195 aa).

3 stretches are compositionally biased toward polar residues: residues 1-10 (MPETSVQNPL), 18-35 (TRSM…SATP), and 55-68 (VLNP…SNSV). Disordered stretches follow at residues 1-38 (MPET…PSFP), 55-130 (VLNP…VGIT), 179-268 (SKSE…PASN), and 610-643 (DKKE…DEIM). 2 stretches are compositionally biased toward basic and acidic residues: residues 83–109 (RFSD…EKNP) and 197–208 (INDKDNSARDQD). Low complexity-rich tracts occupy residues 210 to 252 (NNSG…NNSD) and 619 to 629 (NNDSSVTESST). The region spanning 1025–1164 (TYFVFDATSW…LISDDDAMKK (140 aa)) is the PINc domain.

As to quaternary structure, transiently interacts with PEX14.

The protein resides in the cytoplasm. It localises to the nucleus. Its subcellular location is the peroxisome. May be involved in the regulation of gene expression responses of environment-sensing pathways. In Saccharomyces cerevisiae (strain ATCC 204508 / S288c) (Baker's yeast), this protein is EST/SMG-like protein 2.